A 157-amino-acid polypeptide reads, in one-letter code: Protein Smg homolog (157 aa).

The protein belongs to the Smg family.

This chain is Protein Smg homolog, found in Shewanella frigidimarina (strain NCIMB 400).